A 315-amino-acid chain; its full sequence is Ankyrin repeat domain-containing protein 54 (315 aa).

A disordered region spans residues 1–49 (MDGSSPLLAAAGSDGDRSSSEGEYTLAGGPSAGDTEKREGESPMEAAGA). ANK repeat units follow at residues 124–153 (HAVKRLREAANSNDIDTVRRLLEDDTDPCA), 157–186 (KGRTALHFSSCNGNETIVQLLLSYGADPNQ), 190–219 (LGNTPLHLAACTNHVPVITTLLRGGARVDA), and 223–255 (AGRTPLHLARSKLNILQEGDSRSLETLRGEVTQ).

It localises to the nucleus. It is found in the cytoplasm. The protein localises to the midbody. Functionally, plays an important role in regulating intracellular signaling events associated with erythroid terminal differentiation. This is Ankyrin repeat domain-containing protein 54 (ankrd54) from Danio rerio (Zebrafish).